Reading from the N-terminus, the 401-residue chain is Argininosuccinate synthase (401 aa).

Residue 9–17 (AYSGGLDTS) coordinates ATP. Position 88 (Tyr88) interacts with L-citrulline. Gly118 is an ATP binding site. The L-aspartate site is built by Thr120, Asn124, and Asp125. L-citrulline is bound at residue Asn124. Residues Arg128, Ser177, Ser186, Glu262, and Tyr274 each coordinate L-citrulline.

It belongs to the argininosuccinate synthase family. Type 1 subfamily. Homotetramer.

It is found in the cytoplasm. The enzyme catalyses L-citrulline + L-aspartate + ATP = 2-(N(omega)-L-arginino)succinate + AMP + diphosphate + H(+). The protein operates within amino-acid biosynthesis; L-arginine biosynthesis; L-arginine from L-ornithine and carbamoyl phosphate: step 2/3. In Chlorobaculum tepidum (strain ATCC 49652 / DSM 12025 / NBRC 103806 / TLS) (Chlorobium tepidum), this protein is Argininosuccinate synthase.